Consider the following 138-residue polypeptide: ATP synthase epsilon chain 2 (138 aa).

The protein belongs to the ATPase epsilon chain family. As to quaternary structure, F-type ATPases have 2 components, CF(1) - the catalytic core - and CF(0) - the membrane proton channel. CF(1) has five subunits: alpha(3), beta(3), gamma(1), delta(1), epsilon(1). CF(0) has three main subunits: a, b and c.

The protein localises to the cell inner membrane. Produces ATP from ADP in the presence of a proton gradient across the membrane. The protein is ATP synthase epsilon chain 2 of Syntrophotalea carbinolica (strain DSM 2380 / NBRC 103641 / GraBd1) (Pelobacter carbinolicus).